Here is a 223-residue protein sequence, read N- to C-terminus: DNA mismatch repair protein MutH (223 aa).

The protein belongs to the MutH family.

The protein localises to the cytoplasm. Functionally, sequence-specific endonuclease that cleaves unmethylated GATC sequences. It is involved in DNA mismatch repair. The protein is DNA mismatch repair protein MutH of Shewanella baltica (strain OS195).